We begin with the raw amino-acid sequence, 353 residues long: Photosystem II D2 protein (353 aa).

Thr-2 carries the N-acetylthreonine modification. Phosphothreonine is present on Thr-2. A helical transmembrane segment spans residues 41–61; it reads CAYFAIGGWFTGTTFVTSWYT. His-118 provides a ligand contact to chlorophyll a. Residues 125 to 141 traverse the membrane as a helical segment; it reads GFMLRQFELARSVQLRP. Pheophytin a is bound by residues Gln-130 and Asn-143. Residues 153–166 form a helical membrane-spanning segment; sequence VFVSVFLIYPLGQS. His-198 lines the chlorophyll a pocket. A helical transmembrane segment spans residues 208–228; that stretch reads AALLCAIHGATVENTLFEDGD. Residues His-215 and Phe-262 each contribute to the a plastoquinone site. Position 215 (His-215) interacts with Fe cation. Residue His-269 coordinates Fe cation. The helical transmembrane segment at 279 to 295 threads the bilayer; the sequence is GLWMSALGVVGLALNLR.

The protein belongs to the reaction center PufL/M/PsbA/D family. As to quaternary structure, PSII is composed of 1 copy each of membrane proteins PsbA, PsbB, PsbC, PsbD, PsbE, PsbF, PsbH, PsbI, PsbJ, PsbK, PsbL, PsbM, PsbT, PsbX, PsbY, PsbZ, Psb30/Ycf12, at least 3 peripheral proteins of the oxygen-evolving complex and a large number of cofactors. It forms dimeric complexes. Requires The D1/D2 heterodimer binds P680, chlorophylls that are the primary electron donor of PSII, and subsequent electron acceptors. It shares a non-heme iron and each subunit binds pheophytin, quinone, additional chlorophylls, carotenoids and lipids. There is also a Cl(-1) ion associated with D1 and D2, which is required for oxygen evolution. The PSII complex binds additional chlorophylls, carotenoids and specific lipids. as cofactor.

The protein localises to the plastid. It localises to the chloroplast thylakoid membrane. It carries out the reaction 2 a plastoquinone + 4 hnu + 2 H2O = 2 a plastoquinol + O2. Functionally, photosystem II (PSII) is a light-driven water:plastoquinone oxidoreductase that uses light energy to abstract electrons from H(2)O, generating O(2) and a proton gradient subsequently used for ATP formation. It consists of a core antenna complex that captures photons, and an electron transfer chain that converts photonic excitation into a charge separation. The D1/D2 (PsbA/PsbD) reaction center heterodimer binds P680, the primary electron donor of PSII as well as several subsequent electron acceptors. D2 is needed for assembly of a stable PSII complex. The protein is Photosystem II D2 protein of Carica papaya (Papaya).